The sequence spans 342 residues: S-adenosylmethionine:tRNA ribosyltransferase-isomerase (342 aa).

Belongs to the QueA family. As to quaternary structure, monomer.

The protein resides in the cytoplasm. The catalysed reaction is 7-aminomethyl-7-carbaguanosine(34) in tRNA + S-adenosyl-L-methionine = epoxyqueuosine(34) in tRNA + adenine + L-methionine + 2 H(+). Its pathway is tRNA modification; tRNA-queuosine biosynthesis. Transfers and isomerizes the ribose moiety from AdoMet to the 7-aminomethyl group of 7-deazaguanine (preQ1-tRNA) to give epoxyqueuosine (oQ-tRNA). This chain is S-adenosylmethionine:tRNA ribosyltransferase-isomerase, found in Bacillus licheniformis (strain ATCC 14580 / DSM 13 / JCM 2505 / CCUG 7422 / NBRC 12200 / NCIMB 9375 / NCTC 10341 / NRRL NRS-1264 / Gibson 46).